The chain runs to 288 residues: Phosphatidylserine decarboxylase proenzyme (288 aa).

Residues Asp-89, His-146, and Ser-252 each act as charge relay system; for autoendoproteolytic cleavage activity in the active site. The active-site Schiff-base intermediate with substrate; via pyruvic acid; for decarboxylase activity is the Ser-252. Ser-252 carries the pyruvic acid (Ser); by autocatalysis modification.

Belongs to the phosphatidylserine decarboxylase family. PSD-B subfamily. Prokaryotic type I sub-subfamily. Heterodimer of a large membrane-associated beta subunit and a small pyruvoyl-containing alpha subunit. It depends on pyruvate as a cofactor. Is synthesized initially as an inactive proenzyme. Formation of the active enzyme involves a self-maturation process in which the active site pyruvoyl group is generated from an internal serine residue via an autocatalytic post-translational modification. Two non-identical subunits are generated from the proenzyme in this reaction, and the pyruvate is formed at the N-terminus of the alpha chain, which is derived from the carboxyl end of the proenzyme. The autoendoproteolytic cleavage occurs by a canonical serine protease mechanism, in which the side chain hydroxyl group of the serine supplies its oxygen atom to form the C-terminus of the beta chain, while the remainder of the serine residue undergoes an oxidative deamination to produce ammonia and the pyruvoyl prosthetic group on the alpha chain. During this reaction, the Ser that is part of the protease active site of the proenzyme becomes the pyruvoyl prosthetic group, which constitutes an essential element of the active site of the mature decarboxylase.

Its subcellular location is the cell membrane. The enzyme catalyses a 1,2-diacyl-sn-glycero-3-phospho-L-serine + H(+) = a 1,2-diacyl-sn-glycero-3-phosphoethanolamine + CO2. Its pathway is phospholipid metabolism; phosphatidylethanolamine biosynthesis; phosphatidylethanolamine from CDP-diacylglycerol: step 2/2. In terms of biological role, catalyzes the formation of phosphatidylethanolamine (PtdEtn) from phosphatidylserine (PtdSer). This chain is Phosphatidylserine decarboxylase proenzyme, found in Shewanella frigidimarina (strain NCIMB 400).